A 354-amino-acid chain; its full sequence is Glycine betaine/proline betaine transport system permease protein ProW (354 aa).

Residues 1–28 are disordered; that stretch reads MADQTNPWDTAQVADTTTQTADAWGTPA. The Cytoplasmic portion of the chain corresponds to 1–99; sequence MADQTNPWDT…VDYILNGFQQ (99 aa). A compositionally biased stretch (low complexity) spans 9 to 23; sequence DTAQVADTTTQTADA. The helical transmembrane segment at 100-120 threads the bilayer; sequence LLLGMPAPVAIILFALIAWQV. Residue serine 121 is a topological domain, periplasmic. The helical transmembrane segment at 122–142 threads the bilayer; it reads GVGMGIATLISLIAIGAIGAW. Residues 143–148 lie on the Cytoplasmic side of the membrane; sequence SQAMIT. Residues 145-324 enclose the ABC transmembrane type-1 domain; it reads AMITLALVLT…ILAIILDRLT (180 aa). The chain crosses the membrane as a helical span at residues 149-169; that stretch reads LALVLTALLFCVVIGLPMGIW. The Periplasmic portion of the chain corresponds to 170–198; the sequence is LARSPRAAKIVRPLLDAMQTTPAFVYLVP. The chain crosses the membrane as a helical span at residues 199–219; sequence IVMLFGIGNVPGVVVTIIFAL. Over 220-270 the chain is Cytoplasmic; it reads PPIVRLTILGINQVPADLIEASRSFGASPRQMLFKVQLPLAMPTIMAGVNQ. The helical transmembrane segment at 271-291 threads the bilayer; that stretch reads TLMLALSMVVIASMIAVGGLG. Residues 292–300 are Periplasmic-facing; the sequence is QMVLRGIGR. Residues 301 to 321 traverse the membrane as a helical segment; that stretch reads LDMGLATVGGVGIVILAIILD. Topologically, residues 322-354 are cytoplasmic; it reads RLTQAVGRDSRSRGNRRWYTTGPVGLITRPFVK.

It belongs to the binding-protein-dependent transport system permease family. CysTW subfamily. As to quaternary structure, the complex is composed of two ATP-binding proteins (ProV), two transmembrane proteins (ProW) and a solute-binding protein (ProX).

Its subcellular location is the cell inner membrane. Functionally, part of the ProU ABC transporter complex involved in glycine betaine and proline betaine uptake. Probably responsible for the translocation of the substrate across the membrane. The protein is Glycine betaine/proline betaine transport system permease protein ProW of Salmonella typhimurium (strain LT2 / SGSC1412 / ATCC 700720).